Consider the following 245-residue polypeptide: MPYRKYREKKYETKYREAFKVFQEKIGITFTDEKLLIQAFTHSSYVNEHRKKPHEDNERLEFLGDAVLELTVSQYLFQKYPTMSEGELTKLRAAIVCEPSLVRFANELSFGGLVLLGKGEEMTGGRERPALLADVFEAFIGALYLDQGLETVWGFLKEIVYPKINEGAFSHVMDYKSQLQELIQRDGSGNIEYQILQEKGPAHNREFVSRVTLNNVALGLGSGKSKKEAEQQAAAEALKKLKEQL.

One can recognise an RNase III domain in the interval 19 to 148 (FKVFQEKIGI…FIGALYLDQG (130 aa)). Mg(2+) is bound at residue E61. D65 is a catalytic residue. Mg(2+)-binding residues include D134 and E137. The active site involves E137. In terms of domain architecture, DRBM spans 174–243 (DYKSQLQELI…AAEALKKLKE (70 aa)).

The protein belongs to the ribonuclease III family. In terms of assembly, homodimer. It depends on Mg(2+) as a cofactor.

It localises to the cytoplasm. The catalysed reaction is Endonucleolytic cleavage to 5'-phosphomonoester.. In terms of biological role, digests double-stranded RNA. Involved in the processing of primary rRNA transcript to yield the immediate precursors to the large and small rRNAs (23S and 16S). Processes some mRNAs, and tRNAs when they are encoded in the rRNA operon. Processes pre-crRNA and tracrRNA of type II CRISPR loci if present in the organism. The protein is Ribonuclease 3 of Bacillus cereus (strain ZK / E33L).